Here is a 162-residue protein sequence, read N- to C-terminus: 18.5 kDa class IV heat shock protein (162 aa).

Positions 53 to 149 constitute a sHSP domain; it reads TSSSTVNTQL…PPQLPEIEEN (97 aa).

It belongs to the small heat shock protein (HSP20) family. May form oligomeric structures.

It is found in the cytoplasm. This Arabidopsis thaliana (Mouse-ear cress) protein is 18.5 kDa class IV heat shock protein (HSP18.5).